Reading from the N-terminus, the 471-residue chain is Ribulose bisphosphate carboxylase large chain (471 aa).

The substrate site is built by N115 and T165. K167 functions as the Proton acceptor in the catalytic mechanism. K169 lines the substrate pocket. The Mg(2+) site is built by K193, D195, and E196. An N6-carboxylysine modification is found at K193. Catalysis depends on H286, which acts as the Proton acceptor. Substrate is bound by residues R287, H319, and S371.

The protein belongs to the RuBisCO large chain family. Type I subfamily. As to quaternary structure, heterohexadecamer of 8 large chains and 8 small chains. Mg(2+) is required as a cofactor.

It is found in the carboxysome. It catalyses the reaction 2 (2R)-3-phosphoglycerate + 2 H(+) = D-ribulose 1,5-bisphosphate + CO2 + H2O. The catalysed reaction is D-ribulose 1,5-bisphosphate + O2 = 2-phosphoglycolate + (2R)-3-phosphoglycerate + 2 H(+). Functionally, ruBisCO catalyzes two reactions: the carboxylation of D-ribulose 1,5-bisphosphate, the primary event in carbon dioxide fixation, as well as the oxidative fragmentation of the pentose substrate in the photorespiration process. Both reactions occur simultaneously and in competition at the same active site. The sequence is that of Ribulose bisphosphate carboxylase large chain from Synechococcus sp. (strain CC9605).